The primary structure comprises 257 residues: uncharacterized protein (257 aa).

The helical transmembrane segment at 6–26 (IFWLNLAAIIIISIVVSGGMF) threads the bilayer.

The protein belongs to the staphylococcal tandem lipoprotein family.

Its subcellular location is the cell membrane. This is an uncharacterized protein from Staphylococcus aureus (strain MSSA476).